A 536-amino-acid polypeptide reads, in one-letter code: 2-isopropylmalate synthase (536 aa).

In terms of domain architecture, Pyruvate carboxyltransferase spans 8-273; sequence VLIFDTTLRD…FFGKDSESPT (266 aa). The Mn(2+) site is built by D17, H208, H210, and N244. The segment at 408–536 is regulatory domain; it reads KLHLVQVSCG…PQHDVVKANL (129 aa).

The protein belongs to the alpha-IPM synthase/homocitrate synthase family. LeuA type 1 subfamily. In terms of assembly, homodimer. Requires Mn(2+) as cofactor.

It localises to the cytoplasm. It carries out the reaction 3-methyl-2-oxobutanoate + acetyl-CoA + H2O = (2S)-2-isopropylmalate + CoA + H(+). It participates in amino-acid biosynthesis; L-leucine biosynthesis; L-leucine from 3-methyl-2-oxobutanoate: step 1/4. In terms of biological role, catalyzes the condensation of the acetyl group of acetyl-CoA with 3-methyl-2-oxobutanoate (2-ketoisovalerate) to form 3-carboxy-3-hydroxy-4-methylpentanoate (2-isopropylmalate). The chain is 2-isopropylmalate synthase from Prochlorococcus marinus (strain SARG / CCMP1375 / SS120).